A 128-amino-acid polypeptide reads, in one-letter code: Large ribosomal subunit protein bL12 (128 aa).

Belongs to the bacterial ribosomal protein bL12 family. Homodimer. Part of the ribosomal stalk of the 50S ribosomal subunit. Forms a multimeric L10(L12)X complex, where L10 forms an elongated spine to which 2 to 4 L12 dimers bind in a sequential fashion. Binds GTP-bound translation factors.

Functionally, forms part of the ribosomal stalk which helps the ribosome interact with GTP-bound translation factors. Is thus essential for accurate translation. The sequence is that of Large ribosomal subunit protein bL12 from Picosynechococcus sp. (strain ATCC 27264 / PCC 7002 / PR-6) (Agmenellum quadruplicatum).